A 293-amino-acid chain; its full sequence is Porphobilinogen deaminase (293 aa).

Cys235 is modified (S-(dipyrrolylmethanemethyl)cysteine).

The protein belongs to the HMBS family. Monomer. It depends on dipyrromethane as a cofactor.

It carries out the reaction 4 porphobilinogen + H2O = hydroxymethylbilane + 4 NH4(+). It functions in the pathway porphyrin-containing compound metabolism; protoporphyrin-IX biosynthesis; coproporphyrinogen-III from 5-aminolevulinate: step 2/4. Tetrapolymerization of the monopyrrole PBG into the hydroxymethylbilane pre-uroporphyrinogen in several discrete steps. In Ruminiclostridium cellulolyticum (strain ATCC 35319 / DSM 5812 / JCM 6584 / H10) (Clostridium cellulolyticum), this protein is Porphobilinogen deaminase.